Reading from the N-terminus, the 95-residue chain is Large ribosomal subunit protein bL25 (95 aa).

This sequence belongs to the bacterial ribosomal protein bL25 family. As to quaternary structure, part of the 50S ribosomal subunit; part of the 5S rRNA/L5/L18/L25 subcomplex. Contacts the 5S rRNA. Binds to the 5S rRNA independently of L5 and L18.

Its function is as follows. This is one of the proteins that binds to the 5S RNA in the ribosome where it forms part of the central protuberance. This chain is Large ribosomal subunit protein bL25, found in Haemophilus influenzae (strain ATCC 51907 / DSM 11121 / KW20 / Rd).